A 314-amino-acid polypeptide reads, in one-letter code: MEGVELKEEWQDEDFPIPLPEDDSIEADILAITGPEDQPGSLEVNGNKVRKKLMAPDISLTLDPSDGSVLSDDLDESGEIDLDGLDTPSENSNEFEWEDDLPKPKTTEVIRKGSITEYTAAEEKEDGRRWRMFRIGEQDHRVDMKAIEPYKKVISHGGYYGDGLNAIVVFAVCFMPESSQPNYRYLMDNLFKYVIGTLELLVAENYMIVYLNGATTRRKMPSLGWLRKCYQQIDRRLRKNLKSLIIVHPSWFIRTLLAVTRPFISSKFSQKIRYVFNLAELAELVPMEYVGIPECIKQVDQELNGKQDEPKNEQ.

The disordered stretch occupies residues 1-21 (MEGVELKEEWQDEDFPIPLPE). A compositionally biased stretch (acidic residues) spans 10-21 (WQDEDFPIPLPE). Phosphoserine is present on residues serine 41 and serine 77. Residues 76–100 (ESGEIDLDGLDTPSENSNEFEWEDD) are disordered. A Phosphothreonine modification is found at threonine 87. Phosphoserine occurs at positions 89, 92, and 114. The CRAL-TRIO domain occupies 147–304 (IEPYKKVISH…CIKQVDQELN (158 aa)).

The protein resides in the cytoplasm. Its subcellular location is the perinuclear region. Implicated in the suppression of cell death. Interacts with the BCL-2 and adenovirus E1B 19 kDa proteins. This is BCL2/adenovirus E1B 19 kDa protein-interacting protein 2 (BNIP2) from Homo sapiens (Human).